Reading from the N-terminus, the 564-residue chain is Septation ring formation regulator EzrA (564 aa).

Topologically, residues M1–Y4 are extracellular. A helical membrane pass occupies residues I5 to L23. Over R24–Q564 the chain is Cytoplasmic. 5 coiled-coil regions span residues S99–N138, D190–E223, L271–H300, V350–L435, and V471–E550.

This sequence belongs to the EzrA family.

It localises to the cell membrane. Its function is as follows. Negative regulator of FtsZ ring formation; modulates the frequency and position of FtsZ ring formation. Inhibits FtsZ ring formation at polar sites. Interacts either with FtsZ or with one of its binding partners to promote depolymerization. The protein is Septation ring formation regulator EzrA of Staphylococcus aureus (strain JH1).